A 1129-amino-acid chain; its full sequence is A-kinase anchor protein 11 (1129 aa).

Positions 1–12 (MQKMQCHLRRPL) are enriched in basic residues. Residues 1–21 (MQKMQCHLRRPLHSSSSFSSQ) are disordered. 2 positions are modified to phosphothreonine: Thr-251 and Thr-363. Disordered regions lie at residues 354–376 (IRDR…QTSS), 394–416 (EFAP…SENE), and 434–455 (SEEV…SEHS). The span at 404–416 (PHNSSVGSLSENE) shows a compositional bias: polar residues. Phosphoserine is present on residues Ser-434, Ser-439, and Ser-440. Residues 442–455 (GEEHPEMDVKSEHS) show a composition bias toward basic and acidic residues. The residue at position 595 (Ser-595) is a Phosphoserine. Phosphothreonine is present on Thr-742. Ser-835 bears the Phosphoserine mark. Positions 905–918 (LAEKIVAEAIEKAE) are PKA-RII binding region. Residues 962–1061 (SKEVEDFQST…QEDGAEGLQP (100 aa)) are disordered. A compositionally biased stretch (polar residues) spans 968–995 (FQSTESLGSQQMNLSVGEDSTGSWSNLS). Over residues 1002-1011 (DESSSFHHLS) the composition is skewed to basic and acidic residues. Residues 1012 to 1028 (ESSNGNSSSWSSLGLEG) are compositionally biased toward low complexity. The segment covering 1033–1042 (NNLSFPTSDS) has biased composition (polar residues). Over residues 1043 to 1056 (DGPDDRESEQEDGA) the composition is skewed to acidic residues.

Expressed in brain and testis.

Its subcellular location is the peroxisome. Binds to type II regulatory subunits of protein kinase A and anchors/targets them. In Rattus norvegicus (Rat), this protein is A-kinase anchor protein 11 (Akap11).